The primary structure comprises 685 residues: Augmin complex subunit dgt5 (685 aa).

2 coiled-coil regions span residues 87-165 and 342-379; these read LQRY…NKIQ and NMRN…DLKL.

As to quaternary structure, component of the augmin complex composed of dgt2, dgt3, dgt4, dgt5, dgt6, msd1, msd5 and wac. The complex interacts directly or indirectly with microtubules and is required for centrosome-independent generation of spindle microtubules.

It is found in the cytoplasm. It localises to the cytoskeleton. The protein localises to the spindle. Its subcellular location is the chromosome. The protein resides in the centromere. It is found in the kinetochore. It localises to the microtubule organizing center. The protein localises to the centrosome. In terms of biological role, as part of the augmin complex, plays a role in centrosome-independent generation of spindle microtubules. The complex is required for mitotic spindle assembly through its involvement in localizing gamma-tubulin to spindle microtubules. The protein is Augmin complex subunit dgt5 of Drosophila melanogaster (Fruit fly).